A 141-amino-acid polypeptide reads, in one-letter code: Large ribosomal subunit protein uL11 (141 aa).

It belongs to the universal ribosomal protein uL11 family. In terms of assembly, part of the ribosomal stalk of the 50S ribosomal subunit. Interacts with L10 and the large rRNA to form the base of the stalk. L10 forms an elongated spine to which L12 dimers bind in a sequential fashion forming a multimeric L10(L12)X complex. One or more lysine residues are methylated.

In terms of biological role, forms part of the ribosomal stalk which helps the ribosome interact with GTP-bound translation factors. The sequence is that of Large ribosomal subunit protein uL11 from Synechococcus sp. (strain RCC307).